A 797-amino-acid chain; its full sequence is Kinesin-like protein Klp68D (797 aa).

The Kinesin motor domain occupies 19–344; the sequence is CVQVVVRCRP…LRYASRAKSI (326 aa). Residue 106–113 participates in ATP binding; sequence GQTGTGKT. The stretch at 350-384 forms a coiled coil; sequence KNEDPQDAKLKEYQEEIERLKRLIAPQQQQRSEKQ. Disordered stretches follow at residues 371–450, 610–656, and 722–797; these read RLIA…ELER, SSFP…PSSL, and ANSS…LVNK. The segment covering 386 to 396 has biased composition (basic residues); it reads TIKKQRVKKPK. Acidic residues predominate over residues 417-431; the sequence is QVDEDRDSDGDGAES. Residues 432–450 show a composition bias toward basic and acidic residues; sequence ESDKENEAEVAKSNEELER. A coiled-coil region spans residues 432-580; that stretch reads ESDKENEAEV…LVKELKRQLL (149 aa). The span at 626-638 shows a compositional bias: basic residues; it reads GYRRPVSHPQRRR. Low complexity predominate over residues 782–791; that stretch reads KKPASAYPKA.

This sequence belongs to the TRAFAC class myosin-kinesin ATPase superfamily. Kinesin family. Kinesin II subfamily.

It is found in the cytoplasm. The protein resides in the cytoskeleton. In terms of biological role, plus-end directed microtubule motor that may be used for anterograde axonal transport and could conceivably move cargos in fly neurons different than those moved by kinesin heavy chain or other plus-end directed motors. This chain is Kinesin-like protein Klp68D, found in Drosophila pseudoobscura pseudoobscura (Fruit fly).